The primary structure comprises 528 residues: FAD-dependent monooxygenase DEP2 (528 aa).

Residues 1–23 form the signal peptide; that stretch reads MEDGRSTFKVIIIGAGVTGLTLA. D37, R110, D311, and G324 together coordinate FAD. Residues 479–499 form a helical membrane-spanning segment; sequence VFPQILGVLMVMWSSVWLFHL. N-linked (GlcNAc...) asparagine glycosylation occurs at N521.

This sequence belongs to the paxM FAD-dependent monooxygenase family. The cofactor is FAD.

Its subcellular location is the membrane. It participates in polyketide biosynthesis. In terms of biological role, FAD-dependent monooxygenase; part of the gene cluster that mediates the biosynthesis of depudecin, a highly oxidized eleven-carbon linear polyketide that acts as a histone deacetylase (HDAC) inhibitor and makes a small contribution to pathogenesis. The reducing polyketide synthase DEP5 is the central enzyme in depudecin biosynthesis by yielding the backbone polyketide chain. The monooxygenases DEP2 and DEP4, as well as the uncharacterized protein DEP1, then act as tailoring enzymes to modify the intermediate polyketide chain into depudecin. The chain is FAD-dependent monooxygenase DEP2 from Alternaria brassicicola (Dark leaf spot agent).